Here is a 474-residue protein sequence, read N- to C-terminus: Photosystem II CP43 reaction center protein (474 aa).

Residues 1 to 14 constitute a propeptide that is removed on maturation; the sequence is MKTLYSLRRFYPVE. An N-acetylthreonine modification is found at threonine 15. Phosphothreonine is present on threonine 15. Transmembrane regions (helical) follow at residues 69–93, 134–155, 178–201, 256–276, and 292–313; these read LFEV…PHLA, LLGP…KDRN, KALY…RKIT, KPFA…LSYS, and WFNN…ASQA. [CaMn4O5] cluster is bound at residue glutamate 368. A helical transmembrane segment spans residues 448-472; sequence RARAAAAGFEKGIDRDFEPVLSMTP.

It belongs to the PsbB/PsbC family. PsbC subfamily. As to quaternary structure, PSII is composed of 1 copy each of membrane proteins PsbA, PsbB, PsbC, PsbD, PsbE, PsbF, PsbH, PsbI, PsbJ, PsbK, PsbL, PsbM, PsbT, PsbX, PsbY, PsbZ, Psb30/Ycf12, at least 3 peripheral proteins of the oxygen-evolving complex and a large number of cofactors. It forms dimeric complexes. Binds multiple chlorophylls and provides some of the ligands for the Ca-4Mn-5O cluster of the oxygen-evolving complex. It may also provide a ligand for a Cl- that is required for oxygen evolution. PSII binds additional chlorophylls, carotenoids and specific lipids. is required as a cofactor.

It is found in the plastid. The protein resides in the chloroplast thylakoid membrane. One of the components of the core complex of photosystem II (PSII). It binds chlorophyll and helps catalyze the primary light-induced photochemical processes of PSII. PSII is a light-driven water:plastoquinone oxidoreductase, using light energy to abstract electrons from H(2)O, generating O(2) and a proton gradient subsequently used for ATP formation. This chain is Photosystem II CP43 reaction center protein, found in Citrus sinensis (Sweet orange).